The primary structure comprises 285 residues: Sulfoquinovosyl glycerol transport system permease protein SmoH (285 aa).

A run of 6 helical transmembrane segments spans residues 21 to 41 (FIAASILLVNGLFPAIWILFT), 83 to 103 (FMVALLSTALTILISVLAAYA), 115 to 135 (ILSLIIAVSTFPLVTLLVPLF), 150 to 170 (LILPYTVLSLPVCTLMLVSFF), 195 to 215 (VVVPLCAPGVFTAGILAFVNA), and 250 to 270 (PVISAALVVGIVPVAILIVIF). The 192-residue stretch at 79-270 (LFNSFMVALL…VPVAILIVIF (192 aa)) folds into the ABC transmembrane type-1 domain.

Belongs to the binding-protein-dependent transport system permease family. As to quaternary structure, the complex is probably composed of two ATP-binding proteins (SmoE), two transmembrane proteins (SmoG and SmoH) and a solute-binding protein (SmoF).

The protein resides in the cell inner membrane. Its function is as follows. Part of the ABC transporter complex SmoEFGH involved in sulfoquinovosyl glycerol (SQGro) uptake. Responsible for the translocation of the substrate across the membrane. The sequence is that of Sulfoquinovosyl glycerol transport system permease protein SmoH from Agrobacterium fabrum (strain C58 / ATCC 33970) (Agrobacterium tumefaciens (strain C58)).